Here is a 165-residue protein sequence, read N- to C-terminus: Endoribonuclease YbeY (165 aa).

3 residues coordinate Zn(2+): H130, H134, and H140.

Belongs to the endoribonuclease YbeY family. Zn(2+) is required as a cofactor.

The protein resides in the cytoplasm. Its function is as follows. Single strand-specific metallo-endoribonuclease involved in late-stage 70S ribosome quality control and in maturation of the 3' terminus of the 16S rRNA. The sequence is that of Endoribonuclease YbeY from Streptococcus gordonii (strain Challis / ATCC 35105 / BCRC 15272 / CH1 / DL1 / V288).